A 699-amino-acid chain; its full sequence is Bifunctional protein GAL10 (699 aa).

The tract at residues 1 to 357 (MTAQLQSEST…TTENPFGYQL (357 aa)) is galactowaldenase. 13 to 44 (IVLVTGGAGYIGSHTVVELIENGYDCVVADNL) is a binding site for NAD(+). The interval 358-699 (RGVEARFSAE…YGSKIVYRFS (342 aa)) is mutarotase. His-537 acts as the For mutarotase activity in catalysis. Phosphoserine is present on Ser-562.

In the N-terminal section; belongs to the NAD(P)-dependent epimerase/dehydratase family. This sequence in the C-terminal section; belongs to the aldose epimerase family. NAD(+) is required as a cofactor.

It catalyses the reaction UDP-alpha-D-glucose = UDP-alpha-D-galactose. The catalysed reaction is alpha-D-glucose = beta-D-glucose. The protein operates within carbohydrate metabolism; galactose metabolism. Its pathway is carbohydrate metabolism; hexose metabolism. Mutarotase converts alpha-aldose to the beta-anomer. It is active on D-glucose, L-arabinose, D-xylose, D-galactose, maltose and lactose. This chain is Bifunctional protein GAL10 (GAL10), found in Saccharomyces cerevisiae (strain ATCC 204508 / S288c) (Baker's yeast).